Consider the following 152-residue polypeptide: MAKLEEKLTEMLEPGVEALGFELVGIEFVRAGKHSILRVFIDHENGITVDDCADVSHQVSAILDVEDPISTEYNLEVSSPGMDRPLFKEKHYIESVGEVVQVRLSMPMDDRRNFKGKVLACENGMVSIEVDGQQFQLAVANIEKGNVVPTFD.

Belongs to the RimP family.

It localises to the cytoplasm. Functionally, required for maturation of 30S ribosomal subunits. In Alteromonas mediterranea (strain DSM 17117 / CIP 110805 / LMG 28347 / Deep ecotype), this protein is Ribosome maturation factor RimP.